A 92-amino-acid polypeptide reads, in one-letter code: UPF0358 protein SH1840 (92 aa).

This sequence belongs to the UPF0358 family.

This Staphylococcus haemolyticus (strain JCSC1435) protein is UPF0358 protein SH1840.